Here is a 258-residue protein sequence, read N- to C-terminus: Acyl-[acyl-carrier-protein]--UDP-N-acetylglucosamine O-acyltransferase (258 aa).

Belongs to the transferase hexapeptide repeat family. LpxA subfamily. In terms of assembly, homotrimer.

Its subcellular location is the cytoplasm. It catalyses the reaction a (3R)-hydroxyacyl-[ACP] + UDP-N-acetyl-alpha-D-glucosamine = a UDP-3-O-[(3R)-3-hydroxyacyl]-N-acetyl-alpha-D-glucosamine + holo-[ACP]. Its pathway is glycolipid biosynthesis; lipid IV(A) biosynthesis; lipid IV(A) from (3R)-3-hydroxytetradecanoyl-[acyl-carrier-protein] and UDP-N-acetyl-alpha-D-glucosamine: step 1/6. Involved in the biosynthesis of lipid A, a phosphorylated glycolipid that anchors the lipopolysaccharide to the outer membrane of the cell. This Pseudomonas putida (strain ATCC 47054 / DSM 6125 / CFBP 8728 / NCIMB 11950 / KT2440) protein is Acyl-[acyl-carrier-protein]--UDP-N-acetylglucosamine O-acyltransferase.